The sequence spans 557 residues: Arginine--tRNA ligase (557 aa).

The 'HIGH' region signature appears at 132–142 (ANPTGDLHLGH).

The protein belongs to the class-I aminoacyl-tRNA synthetase family. As to quaternary structure, monomer.

The protein localises to the cytoplasm. It carries out the reaction tRNA(Arg) + L-arginine + ATP = L-arginyl-tRNA(Arg) + AMP + diphosphate. This is Arginine--tRNA ligase from Geobacillus kaustophilus (strain HTA426).